The sequence spans 149 residues: Active regulator of SIRT1 (149 aa).

The interval 1–64 (MSVSLLRKGL…GLRHDQKATA (64 aa)) is disordered. Residues 8–19 (KGLDLLREERSG) show a composition bias toward basic and acidic residues. A compositionally biased stretch (low complexity) spans 30–41 (SSKPKPCLSSSK). The span at 43–52 (GMRKQLRRLK) shows a compositional bias: basic residues.

This sequence belongs to the AROS family. As to quaternary structure, part of the small subunit (SSU) processome, composed of more than 70 proteins and the RNA chaperone small nucleolar RNA (snoRNA) U3.

The protein localises to the nucleus. Its subcellular location is the nucleolus. Its function is as follows. Part of the small subunit (SSU) processome, first precursor of the small eukaryotic ribosomal subunit. During the assembly of the SSU processome in the nucleolus, many ribosome biogenesis factors, an RNA chaperone and ribosomal proteins associate with the nascent pre-rRNA and work in concert to generate RNA folding, modifications, rearrangements and cleavage as well as targeted degradation of pre-ribosomal RNA by the RNA exosome. Acts as a chaperone that specifically mediates the integration of RPS19 in state post-A1. Direct regulator of SIRT1. This chain is Active regulator of SIRT1 (rps19bp1), found in Xenopus tropicalis (Western clawed frog).